The primary structure comprises 192 residues: Glycerol-3-phosphate acyltransferase (192 aa).

The next 5 membrane-spanning stretches (helical) occupy residues 1–21 (MFIA…AYIL), 49–69 (GLAG…IYSL), 80–100 (ELCI…WLKF), 110–130 (IGVI…SWLF), and 143–163 (IVSI…VVAL).

This sequence belongs to the PlsY family. Probably interacts with PlsX.

It is found in the cell inner membrane. It carries out the reaction an acyl phosphate + sn-glycerol 3-phosphate = a 1-acyl-sn-glycero-3-phosphate + phosphate. Its pathway is lipid metabolism; phospholipid metabolism. In terms of biological role, catalyzes the transfer of an acyl group from acyl-phosphate (acyl-PO(4)) to glycerol-3-phosphate (G3P) to form lysophosphatidic acid (LPA). This enzyme utilizes acyl-phosphate as fatty acyl donor, but not acyl-CoA or acyl-ACP. The chain is Glycerol-3-phosphate acyltransferase from Anaplasma phagocytophilum (strain HZ).